We begin with the raw amino-acid sequence, 398 residues long: DJ-1 protein homolog E (398 aa).

PfpI endopeptidase domains are found at residues 7-199 (KSAL…ESLG) and 210-393 (ASVL…TALG).

The protein belongs to the peptidase C56 family. Homotrimer. In terms of tissue distribution, expressed in roots and cauline leaves.

In terms of biological role, may be involved in oxidative stress response. The polypeptide is DJ-1 protein homolog E (DJ1E) (Arabidopsis thaliana (Mouse-ear cress)).